Consider the following 489-residue polypeptide: Flagellar hook-associated protein 2 (489 aa).

Residues 70 to 81 (LNTTKTNGDHKT) are compositionally biased toward basic and acidic residues. Positions 70–92 (LNTTKTNGDHKTFTPSTDSKASP) are disordered. The segment covering 82–91 (FTPSTDSKAS) has biased composition (polar residues). Residues 430–480 (TIATATEGINKRLKTLERQVEQTNRNIDATMERYKRQFTELDKLVNSLNNT) adopt a coiled-coil conformation.

It belongs to the FliD family. In terms of assembly, homopentamer.

The protein localises to the secreted. The protein resides in the bacterial flagellum. Functionally, required for the morphogenesis and for the elongation of the flagellar filament by facilitating polymerization of the flagellin monomers at the tip of growing filament. Forms a capping structure, which prevents flagellin subunits (transported through the central channel of the flagellum) from leaking out without polymerization at the distal end. The chain is Flagellar hook-associated protein 2 (fliD) from Xenorhabdus nematophila (Achromobacter nematophilus).